We begin with the raw amino-acid sequence, 240 residues long: Insulin-like growth factor-binding protein 3 receptor (240 aa).

Residues 1–38 (MGSCQAGHNLHLCLAHHPPLVCATLILLLLGLSGLGLG) form the signal peptide. Over 39–204 (GFLLTHTTGL…SEELALCGSR (166 aa)) the chain is Extracellular. N-linked (GlcNAc...) asparagine glycosylation is present at Asn167. A helical membrane pass occupies residues 205–225 (VLGLGFFLVLLCGLLCCTTAV). At 226–240 (CFHPRPEFHWSRTRL) the chain is on the cytoplasmic side.

As to quaternary structure, interacts with IGFBP3. Interacts with CASP8.

It localises to the cell membrane. In terms of biological role, cell death receptor specific for IGFBP3, may mediate caspase-8-dependent apoptosis upon ligand binding. This is Insulin-like growth factor-binding protein 3 receptor (Tmem219) from Mus musculus (Mouse).